The following is a 213-amino-acid chain: Cytidylate kinase (213 aa).

ATP is bound at residue 7–15; that stretch reads GPAASGKGT.

It belongs to the cytidylate kinase family. Type 1 subfamily.

It localises to the cytoplasm. The catalysed reaction is CMP + ATP = CDP + ADP. It carries out the reaction dCMP + ATP = dCDP + ADP. This is Cytidylate kinase from Rhodospirillum rubrum (strain ATCC 11170 / ATH 1.1.1 / DSM 467 / LMG 4362 / NCIMB 8255 / S1).